We begin with the raw amino-acid sequence, 276 residues long: Sec-independent protein translocase protein TatC (276 aa).

A disordered region spans residues 1 to 29 (MVSLTSVPPYADATPDTRASSGPAPGRRK). 6 helical membrane-spanning segments follow: residues 49–69 (GGLV…LVLL), 103–123 (LFLA…AFVT), 136–156 (GFLG…WWVL), 187–207 (LVLA…LNLA), 221–241 (WAVL…DALT), and 242–262 (MVLV…VAVW).

The protein belongs to the TatC family. As to quaternary structure, the Tat system comprises two distinct complexes: a TatABC complex, containing multiple copies of TatA, TatB and TatC subunits, and a separate TatA complex, containing only TatA subunits. Substrates initially bind to the TatABC complex, which probably triggers association of the separate TatA complex to form the active translocon.

It localises to the cell membrane. In terms of biological role, part of the twin-arginine translocation (Tat) system that transports large folded proteins containing a characteristic twin-arginine motif in their signal peptide across membranes. Together with TatB, TatC is part of a receptor directly interacting with Tat signal peptides. This is Sec-independent protein translocase protein TatC from Xylanimonas cellulosilytica (strain DSM 15894 / JCM 12276 / CECT 5975 / KCTC 9989 / LMG 20990 / NBRC 107835 / XIL07).